We begin with the raw amino-acid sequence, 223 residues long: GTP-binding nuclear protein Ran (223 aa).

The region spanning 8-172 (VVAEFKLVLV…LWILRKLTGD (165 aa)) is the Small GTPase Ran-type domain. A GTP-binding site is contributed by 19–26 (DGGVGKTT). A switch-I region spans residues 38–46 (KRYIATQGV). GTP contacts are provided by residues Gly-69, 123-126 (NKVD), and 151-153 (SAK). The tract at residues 69–85 (GQEKLGGLREGYYIGAD) is switch-II.

The protein belongs to the small GTPase superfamily. Ran family. In terms of assembly, monomer. Found in a nuclear export complex with RanGTP, exportin and pre-miRNA.

It is found in the nucleus. GTP-binding protein involved in nucleocytoplasmic transport. Required for the import of protein into the nucleus and also for RNA export. Involved in chromatin condensation and control of cell cycle. This chain is GTP-binding nuclear protein Ran, found in Tetrahymena pyriformis.